A 384-amino-acid polypeptide reads, in one-letter code: Mannitol-1-phosphate 5-dehydrogenase (384 aa).

3 to 14 serves as a coordination point for NAD(+); it reads AVHFGAGNIGRG.

It belongs to the mannitol dehydrogenase family.

The enzyme catalyses D-mannitol 1-phosphate + NAD(+) = beta-D-fructose 6-phosphate + NADH + H(+). The polypeptide is Mannitol-1-phosphate 5-dehydrogenase (Arthrobacter sp. (strain FB24)).